Reading from the N-terminus, the 246-residue chain is Purine nucleoside phosphorylase ORF3 (246 aa).

3 residues coordinate Zn(2+): H71, C110, and H127.

The protein belongs to the purine nucleoside phosphorylase YfiH/LACC1 family. Homodimer. Cu(2+) serves as cofactor. Zn(2+) is required as a cofactor.

The catalysed reaction is adenosine + phosphate = alpha-D-ribose 1-phosphate + adenine. It catalyses the reaction S-methyl-5'-thioadenosine + phosphate = 5-(methylsulfanyl)-alpha-D-ribose 1-phosphate + adenine. It carries out the reaction inosine + phosphate = alpha-D-ribose 1-phosphate + hypoxanthine. The enzyme catalyses adenosine + H2O + H(+) = inosine + NH4(+). Its function is as follows. Purine nucleoside enzyme that catalyzes the phosphorolysis of adenosine and inosine nucleosides, yielding D-ribose 1-phosphate and the respective free bases, adenine and hypoxanthine. Also catalyzes the phosphorolysis of S-methyl-5'-thioadenosine into adenine and S-methyl-5-thio-alpha-D-ribose 1-phosphate. Also has adenosine deaminase activity. The protein is Purine nucleoside phosphorylase ORF3 of Streptomyces griseus.